The following is a 532-amino-acid chain: Fatty-acid amide hydrolase 2-A (532 aa).

A helical transmembrane segment spans residues 9-29 (FLGRLLRAVVWILFAAFKLFA). Residues Lys129 and Ser204 each act as charge relay system in the active site. Ser228 functions as the Acyl-ester intermediate in the catalytic mechanism.

This sequence belongs to the amidase family.

It is found in the membrane. It catalyses the reaction N-(5Z,8Z,11Z,14Z-eicosatetraenoyl)-ethanolamine + H2O = ethanolamine + (5Z,8Z,11Z,14Z)-eicosatetraenoate. The enzyme catalyses (9Z)-octadecenamide + H2O = (9Z)-octadecenoate + NH4(+). This Danio rerio (Zebrafish) protein is Fatty-acid amide hydrolase 2-A (faah2a).